The following is a 98-amino-acid chain: Integration host factor subunit alpha (98 aa).

The tract at residues 49–71 (FGNFDLRDKNQRPGRNPKTGEDI) is disordered.

The protein belongs to the bacterial histone-like protein family. In terms of assembly, heterodimer of an alpha and a beta chain.

This protein is one of the two subunits of integration host factor, a specific DNA-binding protein that functions in genetic recombination as well as in transcriptional and translational control. This chain is Integration host factor subunit alpha, found in Shewanella sp. (strain ANA-3).